Reading from the N-terminus, the 452-residue chain is Trigger factor (452 aa).

Residues 171-256 (GDRVKVNFKG…ATAIETPEEK (86 aa)) form the PPIase FKBP-type domain.

This sequence belongs to the FKBP-type PPIase family. Tig subfamily.

It localises to the cytoplasm. The enzyme catalyses [protein]-peptidylproline (omega=180) = [protein]-peptidylproline (omega=0). Involved in protein export. Acts as a chaperone by maintaining the newly synthesized protein in an open conformation. Functions as a peptidyl-prolyl cis-trans isomerase. The sequence is that of Trigger factor from Bradyrhizobium sp. (strain BTAi1 / ATCC BAA-1182).